A 5875-amino-acid chain; its full sequence is Probable E3 ubiquitin-protein ligase DDB_G0283893 (5875 aa).

15 disordered regions span residues 17–64, 164–185, 232–276, 302–342, 642–693, 716–740, 1081–1101, 1291–1367, 1806–1851, 1952–1982, 2008–2036, 2109–2203, 2893–2930, 3083–3119, and 3195–3214; these read DNNN…QPPE, NNNNNNDNNSNNKTDDNNQSNN, DSNN…TTTS, PSFK…CGNG, TTTT…SPPI, SIRSSSNKVNEGTPKSSTTTTTTNA, ITPTNTTTTTTTTTPSTTSIP, DGWE…KEST, QESE…SSPP, KKPSSDQQHHSGGCHHSNHHHHHHHSRKDEV, EDEDELQYLSEDEKVVNGNENTGEEDDEE, KALK…TGSG, DSDDSDDEFPTVDENVTSSGLSTSAGGSGGGVAGTNDS, TSPSSSKGKSSSASASSSSSTTTATSTLPSNTQSGSN, and LLPPPSSSSNENVVDNDNTN. The span at 18–52 shows a compositional bias: low complexity; it reads NNNNNNNNNNNNNNNNNNNNNNNNNNNSNNNNNKN. Basic and acidic residues predominate over residues 237–249; that stretch reads DNKENKKEDKESS. Composition is skewed to low complexity over residues 250–276, 317–333, and 642–656; these read KPIASSPIPITTTNIEKPTIATTTTTS, TSTITTQPLPSSTITQP, and TTTTTATTTTTTTTT. Positions 657–669 are enriched in polar residues; sequence NESIPMETTRSST. The span at 670 to 693 shows a compositional bias: low complexity; it reads PIPIVNNNNNNNDSKSNSKKSPPI. A compositionally biased stretch (polar residues) spans 716–725; that stretch reads SIRSSSNKVN. A compositionally biased stretch (low complexity) spans 728–740; the sequence is TPKSSTTTTTTNA. Residues 1297–1330 show a composition bias toward acidic residues; the sequence is FNDDDDEEEDEEEEEEMDEDDSENDEDEDSEESE. The stretch at 1300–1328 forms a coiled coil; that stretch reads DDDEEEDEEEEEEMDEDDSENDEDEDSEE. 2 stretches are compositionally biased toward low complexity: residues 1347-1363 and 1838-1851; these read TTTTTAAAATTTATATT and SNSSPALTASSSPP. Basic residues predominate over residues 1963–1977; the sequence is GGCHHSNHHHHHHHS. The UBR-type zinc finger occupies 2042 to 2113; that stretch reads KVCTYTFTKN…KGNPCKALKP (72 aa). Composition is skewed to low complexity over residues 2118–2168 and 2178–2203; these read PPKQ…TNTN and SSSSSNSSPSFNNNNNNNNNGTTGSG. Residues 2893-2903 show a composition bias toward acidic residues; sequence DSDDSDDEFPT. Over residues 2908–2917 the composition is skewed to low complexity; the sequence is VTSSGLSTSA. A compositionally biased stretch (low complexity) spans 3201-3211; it reads SSSNENVVDND. The ZZ-type zinc-finger motif lies at 3226 to 3280; that stretch reads EVLFSCDLCNINPITGKRWNCSNCGDFDLCNQCYQNPEKDHPKDHIFKEFIIDEP. Residues cysteine 3231, cysteine 3234, cysteine 3246, cysteine 3249, cysteine 3255, cysteine 3258, histidine 3266, and histidine 3270 each contribute to the Zn(2+) site. Disordered stretches follow at residues 3282–3312, 3326–3359, and 3754–3776; these read KDGDEKESTNEPPQQQKQQDQQLQQDLQDDS, LNNNNNNNNNNESMDTSTLTTTTTTTNKTTPTTN, and SSTSQDTQQESSNNNNNNNSNDI. Low complexity-rich tracts occupy residues 3295–3307 and 3327–3358; these read QQQKQQDQQLQQD and NNNNNNNNNNESMDTSTLTTTTTTTNKTTPTT. Positions 3313 to 3332 constitute a UIM domain; that stretch reads EYDEELKIAISMSLNNNNNN. A compositionally biased stretch (polar residues) spans 3754 to 3763; sequence SSTSQDTQQE. The segment covering 3764 to 3774 has biased composition (low complexity); sequence SSNNNNNNNSN. Residues 4118-4146 are a coiled coil; the sequence is IENQEDHKRAIQTIEKESENAHKKYQRLI. Over residues 4182–4222 the composition is skewed to low complexity; that stretch reads NTSTNSTGSNNQSINSSSGNISTNSSSSSSSSFGISNQSSS. 3 disordered regions span residues 4182-4237, 4295-4323, and 4616-4671; these read NTST…GGVI, FISGGGQPSSNDKQQQQQQQQQQSSRQCP, and KILS…FDND. Positions 4223–4236 are enriched in gly residues; the sequence is GNGGGGVGSGGGGV. Positions 4308 to 4317 are enriched in low complexity; that stretch reads QQQQQQQQQQ. Residues 4585-4618 are a coiled coil; sequence QIQQQIALQQQQIQQQIQQQQQQLNESVSGLKIL. Low complexity-rich tracts occupy residues 4619–4635 and 4645–4659; these read SPSSSSSSPSGVGATGS and SSGSSVSGSGSISSS. The interval 5357 to 5870 is UBR4 E3 catalytic module; sequence PALPFVLVLL…EYLLKLYKSV (514 aa). A HemiRING-type zinc finger spans residues 5476–5620; it reads GFTCMVCREG…WVNLNNISRV (145 aa). 4 residues coordinate Zn(2+): cysteine 5479, cysteine 5482, histidine 5554, and cysteine 5557. The UZI domain occupies 5623 to 5870; the sequence is PKFRILSHDL…EYLLKLYKSV (248 aa). The stretch at 5819–5846 forms a coiled coil; it reads QVDVKELLNCFENELKEFQDEMEFFDDE.

It belongs to the UBR4 family.

The protein operates within protein modification; protein ubiquitination. Functionally, probable E3 ubiquitin-protein ligase. The chain is Probable E3 ubiquitin-protein ligase DDB_G0283893 from Dictyostelium discoideum (Social amoeba).